A 468-amino-acid chain; its full sequence is Cysteine--tRNA ligase (468 aa).

Zn(2+) is bound at residue Cys-28. Positions 30-40 (PTVYNYIHIGN) match the 'HIGH' region motif. Residues Cys-212, His-237, and Glu-241 each coordinate Zn(2+). The 'KMSKS' region motif lies at 271 to 275 (KMSKS). An ATP-binding site is contributed by Lys-274.

The protein belongs to the class-I aminoacyl-tRNA synthetase family. As to quaternary structure, monomer. The cofactor is Zn(2+).

The protein localises to the cytoplasm. The enzyme catalyses tRNA(Cys) + L-cysteine + ATP = L-cysteinyl-tRNA(Cys) + AMP + diphosphate. The chain is Cysteine--tRNA ligase from Lacticaseibacillus casei (strain BL23) (Lactobacillus casei).